Reading from the N-terminus, the 772-residue chain is U3 small nucleolar RNA-associated protein 25 homolog (772 aa).

The segment at 1–179 is disordered; sequence MGKRRNRGRS…SEEFTDVKHE (179 aa). Promotes p53/TP53 degradation stretches follow at residues 1–201 and 589–651; these read MGKR…SQRP and VQLP…KKEE. A Phosphoserine modification is found at S10. Positions 25–43 are enriched in basic and acidic residues; that stretch reads RDFGEEHPFYDRVSKKEAK. Phosphoserine is present on residues S52, S60, and S64. Residues 54–70 show a composition bias toward basic and acidic residues; it reads DSSHSESESESEQEHVS. Acidic residues predominate over residues 84 to 124; it reads EEEEEEEEEEEEEEEEEEEEEEEEEDDSAVGDAEMNEEAGS. Over residues 127-136 the composition is skewed to low complexity; the sequence is GSVGEAAVSE. Residues 169–179 show a composition bias toward basic and acidic residues; sequence SSEEFTDVKHE. Positions 652 to 713 are represses p53/TP53 degradation; sequence LNFTHICEYT…YELPTYPHFY (62 aa).

Belongs to the UTP25 family. In terms of assembly, interacts with CAPN3; the interaction is required for CAPN3 translocation to the nucleolus. Post-translationally, phosphorylated. Phosphorylation is required to promote p53/TP53 degradation in the nucleolus which promotes cell cycle progression and liver development. Expressed in all tissues tested: brain, small intestine, large intestine, stomach, liver, spleen, thymus, lung, kidney and testes (at protein level).

Its subcellular location is the nucleus. The protein localises to the nucleolus. Its function is as follows. Component of the ribosomal small subunit processome for the biogenesis of ribosomes, functions in pre-ribosomal RNA (pre-rRNA) processing. Essential for embryonic development in part through the regulation of p53 pathway. Controls the expansion growth of digestive organs and liver. Also involved in the sympathetic neuronal development. Mediates, with CAPN3, the proteasome-independent degradation of p53/TP53. In Mus musculus (Mouse), this protein is U3 small nucleolar RNA-associated protein 25 homolog.